Here is a 28-residue protein sequence, read N- to C-terminus: Antibacterial protein LC3 (28 aa).

Functionally, antibacterial activity against X.campestris, especially strain G, and P.solacearum PO1. This is Antibacterial protein LC3 from Bacillus subtilis.